The sequence spans 137 residues: Large ribosomal subunit protein uL16 (137 aa).

The protein belongs to the universal ribosomal protein uL16 family. Part of the 50S ribosomal subunit.

Binds 23S rRNA and is also seen to make contacts with the A and possibly P site tRNAs. The polypeptide is Large ribosomal subunit protein uL16 (Dinoroseobacter shibae (strain DSM 16493 / NCIMB 14021 / DFL 12)).